The primary structure comprises 32 residues: C-reactive protein (32 aa).

The Pentraxin (PTX) domain maps to valine 2–leucine 32.

This sequence belongs to the pentraxin family. In terms of assembly, homopentamer. Pentraxin (or pentaxin) have a discoid arrangement of 5 non-covalently bound subunits. Glycosylated.

The protein localises to the secreted. In terms of biological role, displays several functions associated with host defense: it promotes agglutination, bacterial capsular swelling, phagocytosis, and complement fixation through its calcium-dependent binding to phosphorylcholine. This chain is C-reactive protein, found in Pleuronectes platessa (European plaice).